We begin with the raw amino-acid sequence, 129 residues long: MARKAKKKNISSGVAHIHSSNQNTIITFTDEKGNVIAWSSSGKVGFKGTKKKTSFAASEAAKDAAQMAKEHGISQVRVEMKGLGSGKDSARKQIEVWGIKVTEIKDVTPIPHNGTRPPKRVLKRLRLKK.

The segment at 108-129 (TPIPHNGTRPPKRVLKRLRLKK) is disordered. Residues 117–129 (PPKRVLKRLRLKK) show a composition bias toward basic residues.

Belongs to the universal ribosomal protein uS11 family. Part of the 30S ribosomal subunit. Interacts with proteins S7 and S18. Binds to IF-3.

Functionally, located on the platform of the 30S subunit, it bridges several disparate RNA helices of the 16S rRNA. Forms part of the Shine-Dalgarno cleft in the 70S ribosome. This Mycoplasmopsis synoviae (strain 53) (Mycoplasma synoviae) protein is Small ribosomal subunit protein uS11.